The sequence spans 260 residues: Ribosomal RNA small subunit methyltransferase A (260 aa).

Residues Leu23, Gly48, Glu69, Asp94, and Asn110 each contribute to the S-adenosyl-L-methionine site.

The protein belongs to the class I-like SAM-binding methyltransferase superfamily. rRNA adenine N(6)-methyltransferase family. RsmA subfamily.

The protein resides in the cytoplasm. It catalyses the reaction adenosine(1518)/adenosine(1519) in 16S rRNA + 4 S-adenosyl-L-methionine = N(6)-dimethyladenosine(1518)/N(6)-dimethyladenosine(1519) in 16S rRNA + 4 S-adenosyl-L-homocysteine + 4 H(+). Functionally, specifically dimethylates two adjacent adenosines (A1518 and A1519) in the loop of a conserved hairpin near the 3'-end of 16S rRNA in the 30S particle. May play a critical role in biogenesis of 30S subunits. In Thermotoga neapolitana (strain ATCC 49049 / DSM 4359 / NBRC 107923 / NS-E), this protein is Ribosomal RNA small subunit methyltransferase A.